Consider the following 182-residue polypeptide: Adenylate kinase (182 aa).

Position 12–17 (12–17) interacts with ATP; it reads GAGKGT. The tract at residues 32–61 is NMP; the sequence is STGDLLRAEVKAGSELGKEAEAVMNRGELV. Residues threonine 33, arginine 38, 59-61, 85-88, and glutamine 92 contribute to the AMP site; these read ELV and GFPR. The LID stretch occupies residues 126–132; sequence ARGRADD. Arginine 127 provides a ligand contact to ATP. Arginine 129 and arginine 140 together coordinate AMP. Glycine 168 contributes to the ATP binding site.

This sequence belongs to the adenylate kinase family. As to quaternary structure, monomer.

Its subcellular location is the cytoplasm. The enzyme catalyses AMP + ATP = 2 ADP. Its pathway is purine metabolism; AMP biosynthesis via salvage pathway; AMP from ADP: step 1/1. Catalyzes the reversible transfer of the terminal phosphate group between ATP and AMP. Plays an important role in cellular energy homeostasis and in adenine nucleotide metabolism. The chain is Adenylate kinase from Synechococcus sp. (strain RCC307).